A 389-amino-acid chain; its full sequence is Chalcone synthase A (389 aa).

Cysteine 164 is a catalytic residue.

Belongs to the thiolase-like superfamily. Chalcone/stilbene synthases family. As to expression, major expressed member of the gene family in various floral tissues and in seedlings treated with UV light. It is relatively low expressed in tissue culture material.

It carries out the reaction (E)-4-coumaroyl-CoA + 3 malonyl-CoA + 3 H(+) = 2',4,4',6'-tetrahydroxychalcone + 3 CO2 + 4 CoA. The protein operates within secondary metabolite biosynthesis; flavonoid biosynthesis. In terms of biological role, the primary product of this enzyme is 4,2',4',6'-tetrahydroxychalcone (also termed naringenin-chalcone or chalcone) which can under specific conditions spontaneously isomerize into naringenin. The chain is Chalcone synthase A (CHSA) from Petunia hybrida (Petunia).